We begin with the raw amino-acid sequence, 179 residues long: Large ribosomal subunit protein uL15 (179 aa).

It belongs to the universal ribosomal protein uL15 family. In terms of assembly, part of the 50S ribosomal subunit.

Its function is as follows. Binds to the 23S rRNA. This Archaeoglobus fulgidus (strain ATCC 49558 / DSM 4304 / JCM 9628 / NBRC 100126 / VC-16) protein is Large ribosomal subunit protein uL15.